A 332-amino-acid chain; its full sequence is Malate dehydrogenase 1, cytoplasmic (332 aa).

NAD(+) contacts are provided by residues 16–17 (QI) and Asp-43. Met-56 carries the methionine sulfoxide modification. NAD(+) is bound at residue Gly-90. Met-97 carries the post-translational modification Methionine sulfoxide. Arg-99 is an oxaloacetate binding site. Residue Gln-113 participates in NAD(+) binding. A Glycyl lysine isopeptide (Lys-Gly) (interchain with G-Cter in ubiquitin) cross-link involves residue Lys-119. Asn-132 lines the NAD(+) pocket. Oxaloacetate is bound by residues Asn-132, Arg-163, His-188, and Ser-243. Catalysis depends on His-188, which acts as the Proton acceptor.

Belongs to the LDH/MDH superfamily. MDH type 2 family. In terms of assembly, forms a homodimer. Forms a disulfide-linked homodimer upon oxidation. Interacts with 14-3-3-like proteins GRF1 GRF3 and GRF8. Interacts with TRX1, TRX2, TRX3, TRX4 and TRX5. As to expression, expressed in rosette leaves.

It localises to the cytoplasm. The catalysed reaction is (S)-malate + NAD(+) = oxaloacetate + NADH + H(+). With respect to regulation, decreased activity upon treatment with hydrogen peroxide. Catalyzes a reversible NAD-dependent dehydrogenase reaction involved in central metabolism and redox homeostasis between organellar compartments. The polypeptide is Malate dehydrogenase 1, cytoplasmic (MDH1) (Arabidopsis thaliana (Mouse-ear cress)).